The chain runs to 284 residues: Nucleotide-binding protein Teth39_0666 (284 aa).

8–15 (GLSGAGKT) lines the ATP pocket. 58-61 (DLRG) lines the GTP pocket.

This sequence belongs to the RapZ-like family.

Displays ATPase and GTPase activities. The chain is Nucleotide-binding protein Teth39_0666 from Thermoanaerobacter pseudethanolicus (strain ATCC 33223 / 39E) (Clostridium thermohydrosulfuricum).